The following is an 89-amino-acid chain: Large ribosomal subunit protein bL27 (89 aa).

A disordered region spans residues 1 to 21; sequence MAHKKSGGSSRNGRDSNPKYL.

It belongs to the bacterial ribosomal protein bL27 family.

The polypeptide is Large ribosomal subunit protein bL27 (Hyphomonas neptunium (strain ATCC 15444)).